Here is a 402-residue protein sequence, read N- to C-terminus: B box and SPRY domain-containing protein (402 aa).

A disordered region spans residues 1-20; the sequence is MSAEGAEPGPGSGSGPGPGP. The B box-type zinc finger occupies 17–65; the sequence is GPGPLCPEHGQALSWFCGSERRPVCAACAGLGGRCRGHRIRRAEERAEE. Residues 212-402 form the B30.2/SPRY domain; the sequence is PLLTQLWATA…VADQTISIVR (191 aa).

Interacts with TRPV5 and TRPV6. Interacts with YWHAZ/14-3-3 protein zeta.

The protein resides in the cytoplasm. Its subcellular location is the membrane. In terms of biological role, may regulate epithelial calcium transport by inhibiting TRPV5 activity. In Homo sapiens (Human), this protein is B box and SPRY domain-containing protein (BSPRY).